A 593-amino-acid chain; its full sequence is NADH-quinone oxidoreductase subunit C/D (593 aa).

Residues 1 to 184 (MTADTAVSIP…DPFSLTLAKQ (184 aa)) form an NADH dehydrogenase I subunit C region. The tract at residues 208–593 (DYMFLNLGPN…IDFVMADVDR (386 aa)) is NADH dehydrogenase I subunit D.

It in the N-terminal section; belongs to the complex I 30 kDa subunit family. In the C-terminal section; belongs to the complex I 49 kDa subunit family. As to quaternary structure, NDH-1 is composed of 13 different subunits. Subunits NuoB, CD, E, F, and G constitute the peripheral sector of the complex.

It localises to the cell inner membrane. The catalysed reaction is a quinone + NADH + 5 H(+)(in) = a quinol + NAD(+) + 4 H(+)(out). Its function is as follows. NDH-1 shuttles electrons from NADH, via FMN and iron-sulfur (Fe-S) centers, to quinones in the respiratory chain. The immediate electron acceptor for the enzyme in this species is believed to be ubiquinone. Couples the redox reaction to proton translocation (for every two electrons transferred, four hydrogen ions are translocated across the cytoplasmic membrane), and thus conserves the redox energy in a proton gradient. This is NADH-quinone oxidoreductase subunit C/D from Ectopseudomonas mendocina (strain ymp) (Pseudomonas mendocina).